The chain runs to 397 residues: Sulfate adenylyltransferase (397 aa).

Belongs to the sulfate adenylyltransferase family.

The catalysed reaction is sulfate + ATP + H(+) = adenosine 5'-phosphosulfate + diphosphate. It participates in sulfur metabolism; hydrogen sulfide biosynthesis; sulfite from sulfate: step 1/3. This is Sulfate adenylyltransferase (sat) from Allochromatium vinosum (strain ATCC 17899 / DSM 180 / NBRC 103801 / NCIMB 10441 / D) (Chromatium vinosum).